The sequence spans 98 residues: NADH-ubiquinone oxidoreductase chain 4L (98 aa).

3 consecutive transmembrane segments (helical) span residues 1–21 (MSMV…GLLM), 29–49 (SLLC…VTIL), and 61–81 (IILL…LVMV).

It belongs to the complex I subunit 4L family. As to quaternary structure, core subunit of respiratory chain NADH dehydrogenase (Complex I) which is composed of 45 different subunits.

It localises to the mitochondrion inner membrane. It carries out the reaction a ubiquinone + NADH + 5 H(+)(in) = a ubiquinol + NAD(+) + 4 H(+)(out). Core subunit of the mitochondrial membrane respiratory chain NADH dehydrogenase (Complex I) which catalyzes electron transfer from NADH through the respiratory chain, using ubiquinone as an electron acceptor. Part of the enzyme membrane arm which is embedded in the lipid bilayer and involved in proton translocation. The protein is NADH-ubiquinone oxidoreductase chain 4L (MT-ND4L) of Halichoerus grypus (Gray seal).